The following is a 183-amino-acid chain: NAD(P)H-quinone oxidoreductase subunit I, chloroplastic (183 aa).

4Fe-4S ferredoxin-type domains are found at residues 55–84 (GRIHFEFDKCIACEVCVRVCPINLPVVDWE) and 95–124 (TSYSIDFGVCIFCGNCVEYCPTNCLSMTEE). [4Fe-4S] cluster is bound by residues cysteine 64, cysteine 67, cysteine 70, cysteine 74, cysteine 104, cysteine 107, cysteine 110, and cysteine 114.

The protein belongs to the complex I 23 kDa subunit family. In terms of assembly, NDH is composed of at least 16 different subunits, 5 of which are encoded in the nucleus. It depends on [4Fe-4S] cluster as a cofactor.

It is found in the plastid. The protein localises to the chloroplast thylakoid membrane. It carries out the reaction a plastoquinone + NADH + (n+1) H(+)(in) = a plastoquinol + NAD(+) + n H(+)(out). The enzyme catalyses a plastoquinone + NADPH + (n+1) H(+)(in) = a plastoquinol + NADP(+) + n H(+)(out). NDH shuttles electrons from NAD(P)H:plastoquinone, via FMN and iron-sulfur (Fe-S) centers, to quinones in the photosynthetic chain and possibly in a chloroplast respiratory chain. The immediate electron acceptor for the enzyme in this species is believed to be plastoquinone. Couples the redox reaction to proton translocation, and thus conserves the redox energy in a proton gradient. The polypeptide is NAD(P)H-quinone oxidoreductase subunit I, chloroplastic (Huperzia lucidula (Shining clubmoss)).